Reading from the N-terminus, the 313-residue chain is Pyrimidine-specific ribonucleoside hydrolase RihB (313 aa).

Asp11 (proton acceptor) is an active-site residue. Residues Asp11, Asp16, and Val124 each coordinate Ca(2+). Gln227 and His239 together coordinate substrate. Residue Asp240 participates in Ca(2+) binding.

It belongs to the IUNH family. RihB subfamily. As to quaternary structure, homotetramer. Ca(2+) serves as cofactor.

It carries out the reaction a pyrimidine ribonucleoside + H2O = a pyrimidine nucleobase + D-ribose. In terms of biological role, hydrolyzes cytidine or uridine to ribose and cytosine or uracil, respectively. Has a clear preference for cytidine over uridine. Strictly specific for ribonucleosides. The protein is Pyrimidine-specific ribonucleoside hydrolase RihB of Escherichia coli O17:K52:H18 (strain UMN026 / ExPEC).